A 684-amino-acid polypeptide reads, in one-letter code: Dipeptidyl-peptidase 5 (684 aa).

An N-terminal signal peptide occupies residues 1-24; sequence MNKKIFSMMAASIIGSAAMTPSAG. WD repeat units follow at residues 87–127, 220–259, and 323–363; these read DTES…TERR, KPWS…DIYI, and TFDY…GKIR. Catalysis depends on charge relay system residues serine 542, aspartate 627, and histidine 659.

This sequence belongs to the peptidase S9C family. As to quaternary structure, homodimer.

Its subcellular location is the periplasm. Functionally, catalyzes the removal of dipeptides from the N-terminus of oligopeptides. Prefers Ala and hydrophobic residues except Pro at the P1 position, and has no preference for P2 residues. Shows high dipeptidyl peptidase activity toward the synthetic substrates Lys-Ala-, Gly-Phe-, Met-Leu-, and Ser-Tyr-methylcoumaryl-7-amide (MCA), and slowly hydrolyzes Val-Tyr-MCA. Is likely involved in amino acid metabolism and bacterial growth of asaccharolytic P.gingivalis, that utilizes amino acids from extracellular proteinaceous nutrients as energy and carbon sources. The polypeptide is Dipeptidyl-peptidase 5 (Porphyromonas gingivalis (strain ATCC 33277 / DSM 20709 / CIP 103683 / JCM 12257 / NCTC 11834 / 2561)).